An 89-amino-acid polypeptide reads, in one-letter code: Probable Fe(2+)-trafficking protein (89 aa).

The protein belongs to the Fe(2+)-trafficking protein family.

Its function is as follows. Could be a mediator in iron transactions between iron acquisition and iron-requiring processes, such as synthesis and/or repair of Fe-S clusters in biosynthetic enzymes. The chain is Probable Fe(2+)-trafficking protein from Stenotrophomonas maltophilia (strain R551-3).